Reading from the N-terminus, the 318-residue chain is Inner membrane protein YbhN (318 aa).

The Periplasmic portion of the chain corresponds to 1–13; sequence MSKSHPRWRLAKK. A helical transmembrane segment spans residues 14-34; that stretch reads ILTWLFFIAVIVLLVVYAKKV. Over 35 to 50 the chain is Cytoplasmic; the sequence is DWEEVWKVIRDYNRVA. A helical transmembrane segment spans residues 51 to 71; that stretch reads LLSAVGLVVVSYLIYGCYDLL. The Periplasmic portion of the chain corresponds to 72–85; sequence ARFYCGHKLAKRQV. Residues 86–106 form a helical membrane-spanning segment; that stretch reads MLVSFICYAFNLTLSTWVGGI. Topologically, residues 107–125 are cytoplasmic; sequence GMRYRLYSRLGLPGSTITR. The chain crosses the membrane as a helical span at residues 126-146; sequence IFSLSITTNWLGYILLAGIIF. At 147 to 165 the chain is on the periplasmic side; the sequence is TAGVVELPDHWYVDQTTLR. The helical transmembrane segment at 166–186 threads the bilayer; sequence ILGIGLLMIIAVYLWFCAFAK. At 187 to 205 the chain is on the cytoplasmic side; the sequence is HRHMTIKGQKLVLPSWKFA. Residues 206–226 form a helical membrane-spanning segment; that stretch reads LAQMLISSVNWMVMGAIIWLL. Residues 227–233 lie on the Periplasmic side of the membrane; the sequence is LGQSVNY. 2 consecutive transmembrane segments (helical) span residues 234-254 and 255-275; these read FFVLGVLLVSSIAGVIVHIPA and GIGVLEAVFIALLAGEHTSKG. The Periplasmic portion of the chain corresponds to 276-277; it reads TI. Residues 278–298 form a helical membrane-spanning segment; it reads IAALLAYRVLYYFIPLLLALI. The Cytoplasmic portion of the chain corresponds to 299–318; it reads CYLLLESQAKKLRAKNEAAM.

This sequence to Synechocystis PCC 6803 slr0712.

Its subcellular location is the cell inner membrane. This chain is Inner membrane protein YbhN (ybhN), found in Escherichia coli (strain K12).